A 99-amino-acid polypeptide reads, in one-letter code: Putative transmembrane protein ORF13 (99 aa).

3 helical membrane-spanning segments follow: residues 8-28 (IATF…MAGI), 42-62 (LGLF…YIIV), and 73-93 (GPIT…AIIA).

It is found in the host membrane. The chain is Putative transmembrane protein ORF13 from His1 virus (isolate Australia/Victoria) (His1V).